The chain runs to 748 residues: MNRTVVSGAVESSFSLTDAVGTEALNMQRSSGINNNMRIPTSPMSFSSNSVNIPGSLVLDGSAASMQHLPQQQQQQLLQQQTGQGSVPMRENNYSHVDKKPRLEVKQEDMLQQQILQQLIQRQDPTGRNPQMQALLQQQRLRQHQQMLQSMSPSQRLQLQQQQQLRQQLQQQGTQQIPPNVRPYEVGVCARKLMMYLYHLQQRPAENCITYWRKFVAEYFSPRAKQRLCLSQYESAGHHALGMFPQAAPDMWQCDLCGTKSGKGFEATFDVLARLIEIKFASGIIDELLYLDHPRENRFPNGLMMLEYRKAVQETVHEQFRVVREGHLRIIFSQDLKILSWEFCARRHEELLLRRLIAPQVNQLLQVAQKCQSTISESGSEGVSQQDLQSNSNMVLGAGRQLAKFMELQSLNDLGYPKRYIRTLQISEVVKSMKDLMNFTGEQKIGPIEGLKRLLEQTVTVKLQKQKMQEMEQFGNNGAINGPVQAQMVLTSGTMNGSTGNNTNNHHQIVGRGAMSGPAEGQMVISSGTVSGATANNNSNNHNQIVGRGAMNGSAQAAAALTNYQSMLMRQNAMNNPNSNTGKQEGFSSQNPTPNSNQSPSSSSQQRHNLVTGGFPNSPQMQQQQRTMNGPTNILPQNHPHQLQSPHSHGNTPEQQMLHQLLQEMSENGGSVQQQQAFSGQSGSNSNAERNTTASTSNISGGGRAPSRNNSFKAASNNNLHFSEDISITDHDFSEDGFFNNNDIYGGL.

2 disordered regions span residues glutamine 67–asparagine 93 and glutamine 138–glutamine 163. Low complexity predominate over residues glutamine 71–glutamine 81. Residues proline 204 to leucine 451 form a dimerization region. Positions arginine 213 to arginine 227 match the Nuclear localization signal motif. Residues asparagine 572–phenylalanine 587 show a composition bias toward polar residues. Disordered regions lie at residues asparagine 572–proline 653 and glutamate 667–phenylalanine 712. Over residues serine 588–glutamine 606 the composition is skewed to low complexity. Positions phenylalanine 615–proline 653 are enriched in polar residues. Residues glutamate 667–serine 686 are compositionally biased toward low complexity. The segment covering asparagine 687–isoleucine 699 has biased composition (polar residues).

Belongs to the adn1/SEU family. Forms corepressor complexes with LUH; LUH is the transcription repressor subunit and SLK1 the specific DNA-binding adapters. As to expression, expressed in young flower meristems, ovules and the carpel margin meristem.

The protein localises to the nucleus. Functionally, probable transcription regulator that functions in the development of the carpel margin meristem similarly to SEUSS (SEU). In association with SEU, supports organ development from meristematic regions by facilitating auxin response and thus organ initiation, and by sustaining meristematic potential through the maintenance of PHABULOSA expression. DNA-binding adapter subunit of the SEU-SLK1 transcriptional corepressor of abiotic stress (e.g. salt and osmotic stress) response genes. The chain is Probable transcriptional regulator SLK1 (SLK1) from Arabidopsis thaliana (Mouse-ear cress).